The following is a 776-amino-acid chain: MASLIYRQLLANSYTVDLSDEIENIGYAKSKNVTINPGPFAQTGYAPVNWGPGEVNDSTTVEPVLDGPYQPTNFNPPVNYWMLLSPLNAGVVVEGTNSIDRWLATVLVEPNVTTTVRTYTLFGVQEQISVENNSTTKWKFINLIKTTPSGNFTLYSTLLSEPKLHGIMKHGGQLWVYNGETPNATTTGYVTSNYDSLTMTSFCDFYIIPRNQESTCTEYINNGLPPIQNTRNVVSVSISSRNIIHNRAQVNEDIVISKTSLWKEVQYNRDITIRFRFANAIIKSGGLGYKWSEISFKPANYQYTYTRDGEEITAHTTCSVNGVNDFSFNGGSLPTDFVISRYEVIKENSYVYVDYWDDSQAFRNVVYVRSLAANLNDVLCTGGDYNFALPVGQWPVMTGGAVMLHAAGVTLSTQFTDFVSLNSLKFRFSLSAEEPYFSITRTRVTRLYGLPAVNPNNDRDYYEIAGRFSLISLVPSNDDYQTPIMNSVTVRQDLERQLGELREEFNALSQEIAISQLIDLALLPLDMFSMFSGIKSTIDAAKSMATNVMKKFKKSKLASSVSTLTDSLSDAASSVSRSSSIRSVSSSVSAWTDVSDQLTDISNSVNSISTQTSTISRRLRLKEIATQTEGMNFDDISAAVLKTKIDKSTQIAANNIPDVITEASEKFIPNRAYRVISNDNVFEASTDGRFFAYKVGTFEEIPFDVQKFADLVTDSPVISAIIDFKTLKNLNDNYGITREQAFNLLRSDPRVLREFINQDNPIIKNRIEQLILQCRL.

The tract at residues 65-224 (LDGPYQPTNF…TCTEYINNGL (160 aa)) is spike head. An intrachain disulfide couples C203 to C216. The tract at residues 248–479 (AQVNEDIVIS…LISLVPSNDD (232 aa)) is spike body and stalk (antigen domain). The DGE motif; interaction with ITGA2/ITGB1 heterodimer motif lies at 308 to 310 (DGE). A disulfide bond links C318 and C380. The interval 389 to 409 (LPVGQWPVMTGGAVMLHAAGV) is hydrophobic; possible role in virus entry into host cell. A YGL motif; interaction with ITGA4 motif is present at residues 448–450 (YGL). A coiled-coil region spans residues 484–511 (IMNSVTVRQDLERQLGELREEFNALSQE). The spike foot stretch occupies residues 510–776 (QEIAISQLID…IEQLILQCRL (267 aa)). The KID motif; interaction with HSPA8 signature appears at 644–646 (KID).

This sequence belongs to the rotavirus VP4 family. As to quaternary structure, homotrimer. VP4 adopts a dimeric appearance above the capsid surface, while forming a trimeric base anchored inside the capsid layer. Only hints of the third molecule are observed above the capsid surface. It probably performs a series of molecular rearrangements during viral entry. Prior to trypsin cleavage, it is flexible. The priming trypsin cleavage triggers its rearrangement into rigid spikes with approximate two-fold symmetry of their protruding parts. After an unknown second triggering event, cleaved VP4 may undergo another rearrangement, in which two VP5* subunits fold back on themselves and join a third subunit to form a tightly associated trimer, shaped like a folded umbrella. Interacts with VP6. Interacts with VP7. In terms of assembly, homotrimer. The trimer is coiled-coil stabilized by its C-terminus, however, its N-terminus, known as antigen domain or 'body', seems to be flexible allowing it to self-associate either as a dimer or a trimer. Post-translationally, proteolytic cleavage by trypsin results in activation of VP4 functions and greatly increases infectivity. The penetration into the host cell is dependent on trypsin treatment of VP4. It produces two peptides, VP5* and VP8* that remain associated with the virion. Cleavage of VP4 by trypsin probably occurs in vivo in the lumen of the intestine prior to infection of enterocytes. Trypsin seems to be incorporated into the three-layered viral particles but remains inactive as long as the viral outer capsid is intact and would only be activated upon the solubilization of the latter.

It localises to the virion. It is found in the host rough endoplasmic reticulum. The protein localises to the host cell membrane. The protein resides in the host cytoplasm. Its subcellular location is the host cytoskeleton. It localises to the host endoplasmic reticulum-Golgi intermediate compartment. Functionally, spike-forming protein that mediates virion attachment to the host epithelial cell receptors and plays a major role in cell penetration, determination of host range restriction and virulence. Rotavirus attachment and entry into the host cell probably involves multiple sequential contacts between the outer capsid proteins VP4 and VP7, and the cell receptors. It is subsequently lost, together with VP7, following virus entry into the host cell. Following entry into the host cell, low intracellular or intravesicular Ca(2+) concentration probably causes the calcium-stabilized VP7 trimers to dissociate from the virion. This step is probably necessary for the membrane-disrupting entry step and the release of VP4, which is locked onto the virion by VP7. During the virus exit from the host cell, VP4 seems to be required to target the newly formed virions to the host cell lipid rafts. Forms the spike 'foot' and 'body' and acts as a membrane permeabilization protein that mediates release of viral particles from endosomal compartments into the cytoplasm. During entry, the part of VP5* that protrudes from the virus folds back on itself and reorganizes from a local dimer to a trimer. This reorganization may be linked to membrane penetration by exposing VP5* hydrophobic region. In integrin-dependent strains, VP5* targets the integrin heterodimer ITGA2/ITGB1 for cell attachment. In terms of biological role, forms the head of the spikes and mediates the recognition of specific host cell surface glycans. It is the viral hemagglutinin and an important target of neutralizing antibodies. In sialic acid-dependent strains, VP8* binds to host cell sialic acid, most probably a ganglioside, providing the initial contact. In some other strains, VP8* mediates the attachment to histo-blood group antigens (HBGAs) for viral entry. In Equus caballus (Horse), this protein is Outer capsid protein VP4.